A 254-amino-acid chain; its full sequence is tRNA (guanine-N(1)-)-methyltransferase (254 aa).

S-adenosyl-L-methionine is bound by residues G113 and 133–138 (IGDYVL).

It belongs to the RNA methyltransferase TrmD family. In terms of assembly, homodimer.

It is found in the cytoplasm. The enzyme catalyses guanosine(37) in tRNA + S-adenosyl-L-methionine = N(1)-methylguanosine(37) in tRNA + S-adenosyl-L-homocysteine + H(+). Its function is as follows. Specifically methylates guanosine-37 in various tRNAs. This chain is tRNA (guanine-N(1)-)-methyltransferase, found in Edwardsiella ictaluri (strain 93-146).